Reading from the N-terminus, the 387-residue chain is Phosphoglycerate kinase (387 aa).

Residues Asp-21 to Asn-23, Arg-36, His-59 to Arg-62, Arg-113, and Arg-146 each bind substrate. ATP-binding positions include Lys-197, Glu-314, and Gly-340–Thr-343.

The protein belongs to the phosphoglycerate kinase family. Monomer.

The protein resides in the cytoplasm. The catalysed reaction is (2R)-3-phosphoglycerate + ATP = (2R)-3-phospho-glyceroyl phosphate + ADP. It functions in the pathway carbohydrate degradation; glycolysis; pyruvate from D-glyceraldehyde 3-phosphate: step 2/5. This is Phosphoglycerate kinase from Pseudomonas putida (strain ATCC 47054 / DSM 6125 / CFBP 8728 / NCIMB 11950 / KT2440).